Here is a 649-residue protein sequence, read N- to C-terminus: V-type ATP synthase subunit I (649 aa).

7 helical membrane passes run 312-332 (FLSF…GLIF), 360-380 (FMIL…FFGV), 455-475 (DNIL…LGML), 485-505 (IGWV…LQAV), 520-540 (GQVG…GGII), 556-576 (VFSD…GAMV), and 593-613 (VLII…GGVI).

This sequence belongs to the V-ATPase 116 kDa subunit family.

It is found in the cell membrane. In terms of biological role, produces ATP from ADP in the presence of a proton gradient across the membrane. This chain is V-type ATP synthase subunit I (atpI), found in Chlamydia muridarum (strain MoPn / Nigg).